The sequence spans 168 residues: G/U mismatch-specific DNA glycosylase (168 aa).

This sequence belongs to the uracil-DNA glycosylase (UDG) superfamily. TDG/mug family. Binds DNA as a monomer.

It localises to the cytoplasm. The catalysed reaction is Specifically hydrolyzes mismatched double-stranded DNA and polynucleotides, releasing free uracil.. Its function is as follows. Excises ethenocytosine and uracil, which can arise by alkylation or deamination of cytosine, respectively, from the corresponding mispairs with guanine in ds-DNA. It is capable of hydrolyzing the carbon-nitrogen bond between the sugar-phosphate backbone of the DNA and the mispaired base. The complementary strand guanine functions in substrate recognition. Required for DNA damage lesion repair in stationary-phase cells. This Salmonella choleraesuis (strain SC-B67) protein is G/U mismatch-specific DNA glycosylase.